Here is a 247-residue protein sequence, read N- to C-terminus: Neurotrophic factor BDNF precursor form (247 aa).

Residues 1–18 (MTILFLTMVISYFGCMKA) form the signal peptide. Positions 19-128 (APMKEANVRG…AANMSMRVRR (110 aa)) are excised as a propeptide. An N-linked (GlcNAc...) asparagine glycan is attached at Asn121. Intrachain disulfides connect Cys141/Cys208, Cys186/Cys237, and Cys196/Cys239.

It belongs to the NGF-beta family. As to quaternary structure, monomers and homodimers. Binds to NTRK2/TRKB. Can form heterodimers with other neurotrophin family members, such as NTF3 and NTF4 (in vitro), but the physiological relevance of this is not clear. BDNF precursor form: interacts with the heterodimer formed by NGFR and SORCS2. Mature BDNF has much lower affinity for the heterodimer formed by NGFR and SORCS2. In terms of processing, N-glycosylated and glycosulfated, contrary to mature BDNF. Post-translationally, mature BDNF is produced by proteolytic removal of the propeptide, catalyzed by a FURIN family member. In addition, the precursor form is proteolytically cleaved within the propeptide, but this is not an obligatory intermediate for the production of mature BDNF. Can be converted into mature BDNF by plasmin (PLG).

The protein resides in the secreted. In terms of biological role, important signaling molecule that activates signaling cascades downstream of NTRK2. During development, promotes the survival and differentiation of selected neuronal populations of the peripheral and central nervous systems. Participates in axonal growth, pathfinding and in the modulation of dendritic growth and morphology. Major regulator of synaptic transmission and plasticity at adult synapses in many regions of the CNS. The versatility of BDNF is emphasized by its contribution to a range of adaptive neuronal responses including long-term potentiation (LTP), long-term depression (LTD), certain forms of short-term synaptic plasticity, as well as homeostatic regulation of intrinsic neuronal excitability. Its function is as follows. Important signaling molecule that activates signaling cascades downstream of NTRK2. Activates signaling cascades via the heterodimeric receptor formed by NGFR and SORCS2. Signaling via NGFR and SORCS2 plays a role in synaptic plasticity and long-term depression (LTD). Binding to NGFR and SORCS2 promotes neuronal apoptosis. Promotes neuronal growth cone collapse. The chain is Neurotrophic factor BDNF precursor form (BDNF) from Ailuropoda melanoleuca (Giant panda).